Here is a 513-residue protein sequence, read N- to C-terminus: Glutamate--tRNA ligase 2 (513 aa).

Positions 11–21 (PSPSGFLHIGS) match the 'HIGH' region motif. A 'KMSKS' region motif is present at residues 240 to 244 (KLSKR). Lys243 contributes to the ATP binding site.

This sequence belongs to the class-I aminoacyl-tRNA synthetase family. Glutamate--tRNA ligase type 1 subfamily. As to quaternary structure, monomer.

It localises to the cytoplasm. It catalyses the reaction tRNA(Glu) + L-glutamate + ATP = L-glutamyl-tRNA(Glu) + AMP + diphosphate. Catalyzes the attachment of glutamate to tRNA(Glu) in a two-step reaction: glutamate is first activated by ATP to form Glu-AMP and then transferred to the acceptor end of tRNA(Glu). The polypeptide is Glutamate--tRNA ligase 2 (Rickettsia massiliae (strain Mtu5)).